Consider the following 315-residue polypeptide: Periplasmic [NiFeSe] hydrogenase small subunit (315 aa).

The tat-type signal signal peptide spans 1-32; it reads MSLSRREFVKLCSAGVAGLGISQIYHPGIVHA. Residues C50, C53, C158, C196, H240, C243, C263, C269, C278, C290, C296, and C299 each contribute to the [4Fe-4S] cluster site.

The protein belongs to the [NiFe]/[NiFeSe] hydrogenase small subunit family. In terms of assembly, heterodimer of a large and a small subunit. [4Fe-4S] cluster serves as cofactor. In terms of processing, predicted to be exported by the Tat system. The position of the signal peptide cleavage has been experimentally proven.

It localises to the periplasm. The enzyme catalyses H2 + A = AH2. The chain is Periplasmic [NiFeSe] hydrogenase small subunit from Desulfomicrobium baculatum (Desulfovibrio baculatus).